Reading from the N-terminus, the 362-residue chain is 3-dehydroquinate synthase (362 aa).

Residues 71–76 (DGEQYK), 105–109 (GVIGD), 129–130 (TT), Lys142, Lys151, and 169–172 (CLQT) contribute to the NAD(+) site. 3 residues coordinate Zn(2+): Glu184, His247, and His264.

The protein belongs to the sugar phosphate cyclases superfamily. Dehydroquinate synthase family. Co(2+) is required as a cofactor. It depends on Zn(2+) as a cofactor. The cofactor is NAD(+).

The protein localises to the cytoplasm. It carries out the reaction 7-phospho-2-dehydro-3-deoxy-D-arabino-heptonate = 3-dehydroquinate + phosphate. It participates in metabolic intermediate biosynthesis; chorismate biosynthesis; chorismate from D-erythrose 4-phosphate and phosphoenolpyruvate: step 2/7. Catalyzes the conversion of 3-deoxy-D-arabino-heptulosonate 7-phosphate (DAHP) to dehydroquinate (DHQ). In Cronobacter sakazakii (strain ATCC BAA-894) (Enterobacter sakazakii), this protein is 3-dehydroquinate synthase.